The sequence spans 400 residues: Na(+)/H(+) antiporter NhaA (400 aa).

Transmembrane regions (helical) follow at residues 18–38, 68–88, 105–125, 133–153, 163–183, 186–206, 211–231, 232–252, 267–287, 305–325, 338–358, and 372–392; these read LATEAAGGVLLMFTAALAIII, VHMWINDGLMAIFFLLVGLEI, LPALPALMGMAVPALIYLAVS, GGWAIPAATDIAFAVGALALL, VMLVSVAIIDDMGAVAIIAVF, SSINLLALAGAAGIVAVLLAF, VVALWPYLIGVAALWYVTLLS, GVHATIAGVVGALLIPYSAGS, GLAPWVGFLIVPAFGFANAGV, IALGLLLGKQLGVFAGVLLAV, WLQIYGVAMLCGIGFTMSLFI, and AAKIGILLGSLLSAVIACVIL.

This sequence belongs to the NhaA Na(+)/H(+) (TC 2.A.33) antiporter family.

The protein localises to the cell inner membrane. The catalysed reaction is Na(+)(in) + 2 H(+)(out) = Na(+)(out) + 2 H(+)(in). In terms of biological role, na(+)/H(+) antiporter that extrudes sodium in exchange for external protons. The polypeptide is Na(+)/H(+) antiporter NhaA (Pseudomonas entomophila (strain L48)).